We begin with the raw amino-acid sequence, 437 residues long: Epsilon-sarcoglycan (437 aa).

Over 1-317 the chain is Extracellular; sequence MQLPRWWELG…LKSRDYYTDF (317 aa). N-linked (GlcNAc...) asparagine glycosylation occurs at Asn200. Residues 318-338 form a helical membrane-spanning segment; the sequence is LITLAVPSAVALVLFLILAYI. The Cytoplasmic portion of the chain corresponds to 339–437; the sequence is MCCRREGVEK…QQQTTGKWYP (99 aa).

This sequence belongs to the sarcoglycan alpha/epsilon family. Post-translationally, N-glycosylated. In terms of processing, ubiquitinated, leading to its degradation by the proteasome. As to expression, ubiquitous.

Its subcellular location is the cell membrane. It localises to the sarcolemma. The protein localises to the cytoplasm. It is found in the cytoskeleton. The protein resides in the cell projection. Its subcellular location is the dendrite. It localises to the golgi apparatus. Functionally, component of the sarcoglycan complex, a subcomplex of the dystrophin-glycoprotein complex which forms a link between the F-actin cytoskeleton and the extracellular matrix. The protein is Epsilon-sarcoglycan (SGCE) of Homo sapiens (Human).